The chain runs to 396 residues: Acetate kinase (396 aa).

Asparagine 7 contacts Mg(2+). Lysine 14 contributes to the ATP binding site. A substrate-binding site is contributed by arginine 91. The active-site Proton donor/acceptor is the aspartate 148. ATP-binding positions include 208–212 (HLGNG), 283–285 (DFR), and 331–335 (GIGEN). Glutamate 384 contributes to the Mg(2+) binding site.

The protein belongs to the acetokinase family. In terms of assembly, homodimer. It depends on Mg(2+) as a cofactor. Mn(2+) serves as cofactor.

It localises to the cytoplasm. It catalyses the reaction acetate + ATP = acetyl phosphate + ADP. The protein operates within metabolic intermediate biosynthesis; acetyl-CoA biosynthesis; acetyl-CoA from acetate: step 1/2. Its function is as follows. Catalyzes the formation of acetyl phosphate from acetate and ATP. Can also catalyze the reverse reaction. This chain is Acetate kinase, found in Desulforamulus reducens (strain ATCC BAA-1160 / DSM 100696 / MI-1) (Desulfotomaculum reducens).